Here is a 279-residue protein sequence, read N- to C-terminus: Large ribosomal subunit protein uL2 (279 aa).

The tract at residues 222–279 is disordered; the sequence is GMAMNPVDHPMGGGEGKSKSGGGRRHPKSPWGQLAKGLKTRNKKKASQKLIVRGRNAK. Residues 232 to 242 show a composition bias toward gly residues; the sequence is MGGGEGKSKSG. The segment covering 259 to 268 has biased composition (basic residues); it reads LKTRNKKKAS.

The protein belongs to the universal ribosomal protein uL2 family. In terms of assembly, part of the 50S ribosomal subunit. Forms a bridge to the 30S subunit in the 70S ribosome.

Its function is as follows. One of the primary rRNA binding proteins. Required for association of the 30S and 50S subunits to form the 70S ribosome, for tRNA binding and peptide bond formation. It has been suggested to have peptidyltransferase activity; this is somewhat controversial. Makes several contacts with the 16S rRNA in the 70S ribosome. This Chlorobium phaeobacteroides (strain DSM 266 / SMG 266 / 2430) protein is Large ribosomal subunit protein uL2.